A 350-amino-acid polypeptide reads, in one-letter code: Ferredoxin--NADP reductase (350 aa).

FAD is bound by residues Asp-49, Gln-57, Tyr-62, Val-102, Phe-136, Asp-303, and Thr-344.

It belongs to the ferredoxin--NADP reductase type 2 family. Homodimer. FAD serves as cofactor.

It carries out the reaction 2 reduced [2Fe-2S]-[ferredoxin] + NADP(+) + H(+) = 2 oxidized [2Fe-2S]-[ferredoxin] + NADPH. This Granulibacter bethesdensis (strain ATCC BAA-1260 / CGDNIH1) protein is Ferredoxin--NADP reductase.